A 119-amino-acid chain; its full sequence is Large ribosomal subunit protein uL18 (119 aa).

Belongs to the universal ribosomal protein uL18 family. In terms of assembly, part of the 50S ribosomal subunit; part of the 5S rRNA/L5/L18/L25 subcomplex. Contacts the 5S and 23S rRNAs.

Functionally, this is one of the proteins that bind and probably mediate the attachment of the 5S RNA into the large ribosomal subunit, where it forms part of the central protuberance. This chain is Large ribosomal subunit protein uL18, found in Staphylococcus aureus (strain Mu3 / ATCC 700698).